A 341-amino-acid chain; its full sequence is Phosphate acyltransferase (341 aa).

The protein belongs to the PlsX family. In terms of assembly, homodimer. Probably interacts with PlsY.

It is found in the cytoplasm. The catalysed reaction is a fatty acyl-[ACP] + phosphate = an acyl phosphate + holo-[ACP]. It participates in lipid metabolism; phospholipid metabolism. Its function is as follows. Catalyzes the reversible formation of acyl-phosphate (acyl-PO(4)) from acyl-[acyl-carrier-protein] (acyl-ACP). This enzyme utilizes acyl-ACP as fatty acyl donor, but not acyl-CoA. The sequence is that of Phosphate acyltransferase from Aliivibrio salmonicida (strain LFI1238) (Vibrio salmonicida (strain LFI1238)).